Reading from the N-terminus, the 234-residue chain is Structural PPIase-like protein L605 (234 aa).

The region spanning 18–205 is the PPIase cyclophilin-type domain; it reads YMDIVLNNEI…PTFSIGKCGA (188 aa).

Belongs to the cyclophilin-type PPIase family. Homotrimer.

Its subcellular location is the virion. It localises to the host cytoplasm. The sequence is that of Structural PPIase-like protein L605 from Acanthamoeba polyphaga mimivirus (APMV).